Reading from the N-terminus, the 142-residue chain is Organic hydroperoxide resistance protein-like 2 (142 aa).

The protein belongs to the OsmC/Ohr family.

The chain is Organic hydroperoxide resistance protein-like 2 from Staphylococcus epidermidis (strain ATCC 35984 / DSM 28319 / BCRC 17069 / CCUG 31568 / BM 3577 / RP62A).